We begin with the raw amino-acid sequence, 320 residues long: Phospho-N-acetylmuramoyl-pentapeptide-transferase (320 aa).

9 helical membrane-spanning segments follow: residues 5–25 (FWAFTRAFIVTVIFMPAVIKF), 51–71 (MGGALFIAAASLSALIGSVAY), 75–95 (IGFVMVLIPILAVVAYAIIGG), 121–141 (LCAVVIMIIMWIMQIPLILNI), 143–163 (FIGVFNLGIFYFIFLWFWLVG), 176–196 (GLLTGTSLIVYLVYTWIALGV), 198–218 (NHIIVIFNASIIGALVGFLLF), 241–261 (IESIVLGIPFSLLWFGLIFVI), and 300–320 (IDALFWIVTAIIGIIGILYMS).

This sequence belongs to the glycosyltransferase 4 family. MraY subfamily. Requires Mg(2+) as cofactor.

The protein resides in the cell membrane. It catalyses the reaction UDP-N-acetyl-alpha-D-muramoyl-L-alanyl-gamma-D-glutamyl-L-lysyl-D-alanyl-D-alanine + di-trans,octa-cis-undecaprenyl phosphate = Mur2Ac(oyl-L-Ala-gamma-D-Glu-L-Lys-D-Ala-D-Ala)-di-trans,octa-cis-undecaprenyl diphosphate + UMP. It participates in cell wall biogenesis; peptidoglycan biosynthesis. In terms of biological role, catalyzes the initial step of the lipid cycle reactions in the biosynthesis of the cell wall peptidoglycan: transfers peptidoglycan precursor phospho-MurNAc-pentapeptide from UDP-MurNAc-pentapeptide onto the lipid carrier undecaprenyl phosphate, yielding undecaprenyl-pyrophosphoryl-MurNAc-pentapeptide, known as lipid I. The protein is Phospho-N-acetylmuramoyl-pentapeptide-transferase of Leuconostoc mesenteroides subsp. mesenteroides (strain ATCC 8293 / DSM 20343 / BCRC 11652 / CCM 1803 / JCM 6124 / NCDO 523 / NBRC 100496 / NCIMB 8023 / NCTC 12954 / NRRL B-1118 / 37Y).